Reading from the N-terminus, the 193-residue chain is Threonylcarbamoyl-AMP synthase (193 aa).

In terms of domain architecture, YrdC-like spans 14 to 193; sequence SRLQQRARKQ…IDLESGRVLR (180 aa).

This sequence belongs to the SUA5 family. TsaC subfamily.

It localises to the cytoplasm. The enzyme catalyses L-threonine + hydrogencarbonate + ATP = L-threonylcarbamoyladenylate + diphosphate + H2O. Required for the formation of a threonylcarbamoyl group on adenosine at position 37 (t(6)A37) in tRNAs that read codons beginning with adenine. Catalyzes the conversion of L-threonine, HCO(3)(-)/CO(2) and ATP to give threonylcarbamoyl-AMP (TC-AMP) as the acyladenylate intermediate, with the release of diphosphate. The sequence is that of Threonylcarbamoyl-AMP synthase from Chromobacterium violaceum (strain ATCC 12472 / DSM 30191 / JCM 1249 / CCUG 213 / NBRC 12614 / NCIMB 9131 / NCTC 9757 / MK).